We begin with the raw amino-acid sequence, 291 residues long: U3 small nucleolar ribonucleoprotein protein IMP4 (291 aa).

Residues 83-264 form the Brix domain; it reads PKVMITTSRD…LYMIRLGTLE (182 aa).

In terms of assembly, part of the small subunit (SSU) processome, composed of more than 70 proteins and the RNA chaperone small nucleolar RNA (snoRNA) U3. Component of a heterotrimeric complex containing IMP3, IMP4 and MPHOSPH10. Interacts with MPHOSPH10.

It localises to the nucleus. The protein localises to the nucleolus. Functionally, component of the 60-80S U3 small nucleolar ribonucleoprotein (U3 snoRNP). Required for the early cleavages during pre-18S ribosomal RNA processing. Part of the small subunit (SSU) processome, first precursor of the small eukaryotic ribosomal subunit. During the assembly of the SSU processome in the nucleolus, many ribosome biogenesis factors, an RNA chaperone and ribosomal proteins associate with the nascent pre-rRNA and work in concert to generate RNA folding, modifications, rearrangements and cleavage as well as targeted degradation of pre-ribosomal RNA by the RNA exosome. This chain is U3 small nucleolar ribonucleoprotein protein IMP4, found in Homo sapiens (Human).